Consider the following 1561-residue polypeptide: Adhesion G protein-coupled receptor B2 (1561 aa).

The N-terminal stretch at methionine 1 to alanine 20 is a signal peptide. The Extracellular portion of the chain corresponds to phenylalanine 21–leucine 930. 3 N-linked (GlcNAc...) asparagine glycosylation sites follow: asparagine 94, asparagine 182, and asparagine 183. O-linked (Xyl...) (chondroitin sulfate) serine glycosylation occurs at serine 257. 4 consecutive TSP type-1 domains span residues aspartate 300–proline 353, histidine 355–proline 408, glutamate 410–proline 463, and aspartate 466–proline 519. 14 cysteine pairs are disulfide-bonded: cysteine 312–cysteine 346, cysteine 316–cysteine 352, cysteine 327–cysteine 336, cysteine 367–cysteine 402, cysteine 371–cysteine 407, cysteine 382–cysteine 392, cysteine 422–cysteine 457, cysteine 426–cysteine 462, cysteine 437–cysteine 447, cysteine 478–cysteine 513, cysteine 482–cysteine 518, cysteine 493–cysteine 503, cysteine 525–cysteine 560, and cysteine 548–cysteine 578. A glycan (N-linked (GlcNAc...) asparagine) is linked at asparagine 347. An N-linked (GlcNAc...) asparagine glycan is attached at asparagine 428. Residues asparagine 551 and asparagine 636 are each glycosylated (N-linked (GlcNAc...) asparagine). Residues aspartate 748–leucine 918 form the GAIN-B domain. Residues leucine 757–leucine 797 form a disordered region. A compositionally biased stretch (low complexity) spans serine 760 to serine 775. N-linked (GlcNAc...) asparagine glycosylation occurs at asparagine 861. Cystine bridges form between cysteine 868-cysteine 900 and cysteine 888-cysteine 902. Positions cysteine 868–leucine 918 are GPS. The helical transmembrane segment at valine 931–phenylalanine 951 threads the bilayer. The Cytoplasmic segment spans residues tryptophan 952 to arginine 959. The chain crosses the membrane as a helical span at residues serine 960–glycine 980. Over glutamine 981–glycine 988 the chain is Extracellular. A helical transmembrane segment spans residues valine 989–leucine 1009. Residues threonine 1010–lysine 1030 are Cytoplasmic-facing. The chain crosses the membrane as a helical span at residues arginine 1031–threonine 1051. Residues arginine 1052 to tyrosine 1072 are Extracellular-facing. A helical transmembrane segment spans residues alanine 1073–phenylalanine 1093. At asparagine 1094–arginine 1115 the chain is on the cytoplasmic side. Residues cysteine 1116–leucine 1136 traverse the membrane as a helical segment. Over serine 1137–serine 1147 the chain is Extracellular. Residues leucine 1148–alanine 1168 traverse the membrane as a helical segment. Over methionine 1169–valine 1561 the chain is Cytoplasmic. Tyrosine 1345 bears the Phosphotyrosine mark. Disordered regions lie at residues leucine 1355–arginine 1377, phenylalanine 1417–threonine 1447, and arginine 1491–valine 1561. Positions glutamate 1366–proline 1376 are enriched in basic and acidic residues. Basic and acidic residues predominate over residues arginine 1491 to proline 1502. Positions serine 1519–leucine 1528 are enriched in polar residues. Positions glutamate 1551–valine 1561 are enriched in acidic residues.

This sequence belongs to the G-protein coupled receptor 2 family. Adhesion G-protein coupled receptor (ADGR) subfamily. In terms of assembly, heterodimer of 2 chains generated by proteolytic processing; the large extracellular N-terminal fragment and the membrane-bound C-terminal fragment predominantly remain associated and non-covalently linked. Interacts with GABPB2. Interacts (via carboxy-terminus) with TAX1BP3. Interacts with GNAZ. Interacts with SH3GL2. Glycosylated. Post-translationally, autoproteolytically processed at the GPS region of the GAIN-B domain; this cleavage modulates receptor activity. Additionally, furin is involved in the cleavage at another site, in the middle of the extracellular domain, generating a soluble fragment. In terms of tissue distribution, specifically expressed in the brain. The peak level in the brain is observed 10 days after birth.

It is found in the cell membrane. The protein localises to the secreted. Its activity is regulated as follows. Receptor activity is regulated by proteolytic processing. The long N-terminal has a an inhibitory effect on the constitutive signaling activity. Removal of the N-terminal region induces an increase of the receptor activity. Functionally, orphan G-protein coupled receptor involved in cell adhesion and probably in cell-cell interactions. Activates NFAT-signaling pathway, a transcription factor, via the G-protein GNAZ. Involved in angiogenesis inhibition. The chain is Adhesion G protein-coupled receptor B2 (Adgrb2) from Mus musculus (Mouse).